The following is a 399-amino-acid chain: MRKNLTKLTRVKRETKMGRATRWFKGLFGIKPSSCSGTDSGTISNRLDRSLCDSYETIPPNISEKEAAWLRSFYAAGEEEKERRTHAIAVAAATAAAADAAVAAAKAAAAVVRLQGQGKSGPLGGGKSREHRAAMQIQCAFRGYLARKALRALRGVVKIQALVRGFLVRNQAAATLRSMEALVRAQKTVKIQRALRRNGNAAPARKSTERFSGSLENRNNGEETAKIVEVDTGTRPGTYRIRAPVLSGSDFLDNPFRRTLSSPLSGRVPPRLSMPKPEWEECSSKFPTAQSTPRFSGGSPARSVCCSGGGVEAEVDTEADANRFCFLSGEFNSGYMADTTSFRAKLRSHSAPRQRPESNASAGGWRRSIGGGGVRMQRQSCSGVREAVVGNIERRRMRW.

A Nuclear localization signal motif is present at residues 1-8 (MRKNLTKL). 2 calmodulin-binding regions span residues 81–91 (KERRTHAIAVA) and 99–110 (DAAVAAAKAAAA). IQ domains follow at residues 130–158 (EHRAAMQIQCAFRGYLARKALRALRGVVK) and 159–181 (IQALVRGFLVRNQAAATLRSMEA). Disordered stretches follow at residues 198–219 (NGNAAPARKSTERFSGSLENRN), 262–302 (SPLS…SPAR), and 346–377 (LRSHSAPRQRPESNASAGGWRRSIGGGGVRMQ). Residues 285-294 (KFPTAQSTPR) show a composition bias toward polar residues.

It belongs to the IQD family. As to quaternary structure, binds to multiple calmodulin (CaM) in the presence of Ca(2+) and CaM-like proteins.

It is found in the nucleus. Its subcellular location is the cell membrane. In terms of biological role, may be involved in cooperative interactions with calmodulins or calmodulin-like proteins. Recruits calmodulin proteins to microtubules, thus being a potential scaffold in cellular signaling and trafficking. May associate with nucleic acids and regulate gene expression at the transcriptional or post-transcriptional level. The polypeptide is Protein IQ-DOMAIN 25 (Arabidopsis thaliana (Mouse-ear cress)).